The chain runs to 661 residues: Fusaric acid cluster transcription factor FUB12 (661 aa).

Positions 17–48 (CVPCRTRKIKCNAAVVGLPCGSCVSRECPDDC) form a DNA-binding region, zn(2)-C6 fungal-type. Disordered regions lie at residues 57–131 (TVKV…RPPG) and 151–184 (SAAQ…PQLD). Positions 73–98 (PDTNGSVLSPRQQQLPTNVSRQTTDS) are enriched in polar residues. Positions 99–109 (SHSDPVEESIH) are enriched in basic and acidic residues. Polar residues predominate over residues 110 to 119 (ASHTGSSLRN). Basic and acidic residues predominate over residues 120 to 129 (DTPHSRDRRP).

It is found in the nucleus. Functionally, efflux pump involved in export of biosynthesis of fusaric acid, a mycotoxin with low to moderate toxicity to animals and humans, but with high phytotoxic properties. Constitutes a self-protecting mechanism of the fungus against critical levels of FSA within the cell. The polypeptide is Fusaric acid cluster transcription factor FUB12 (Fusarium oxysporum f. sp. lycopersici (strain 4287 / CBS 123668 / FGSC 9935 / NRRL 34936) (Fusarium vascular wilt of tomato)).